The sequence spans 442 residues: D-galactonate dehydratase family member SSBG_02010 (442 aa).

Mg(2+) is bound at residue aspartate 246. Histidine 248 is a D-arabinonate binding site. Mg(2+)-binding residues include glutamate 272 and glutamate 298. Residues glutamate 298, arginine 319, histidine 348, and glutamate 375 each coordinate D-arabinonate.

This sequence belongs to the mandelate racemase/muconate lactonizing enzyme family. GalD subfamily.

In terms of biological role, has no detectable activity with D-mannonate and with a panel of 70 other acid sugars (in vitro), in spite of the conservation of the residues that are expected to be important for catalytic activity and cofactor binding. May have evolved a divergent function. This Streptomyces sp. (strain SPB074) protein is D-galactonate dehydratase family member SSBG_02010.